Here is a 643-residue protein sequence, read N- to C-terminus: Phosphatidylinositol-3,5-bisphosphate 3-phosphatase MTMR2 (643 aa).

The interval 1–52 is disordered; that stretch reads MEKSSSCESLGAQLPAARLPSEDSLSSASTSHSENSVHTKSASAISSDSIST. Phosphoserine occurs at positions 6 and 9. A compositionally biased stretch (polar residues) spans 23–40; that stretch reads DSLSSASTSHSENSVHTK. The span at 41-52 shows a compositional bias: low complexity; it reads SASAISSDSIST. S58 bears the Phosphoserine mark. The GRAM domain maps to 68-139; sequence NKLAEMEEPA…GVISRVEKIG (72 aa). Residues 205–580 enclose the Myotubularin phosphatase domain; the sequence is GWKLYDPLLE…RHLELWVGYY (376 aa). 3 residues coordinate a 1,2-diacyl-sn-glycero-3-phospho-(1D-myo-inositol-3,5-bisphosphate): N330, N355, and I356. N330, N355, and I356 together coordinate a 1,2-diacyl-sn-glycero-3-phospho-(1D-myo-inositol-3-phosphate). The active-site Phosphocysteine intermediate is C417. A 1,2-diacyl-sn-glycero-3-phospho-(1D-myo-inositol-3,5-bisphosphate)-binding residues include S418, D419, G420, W421, D422, R423, R459, and R463. S418, D419, G420, W421, D422, and R423 together coordinate a 1,2-diacyl-sn-glycero-3-phospho-(1D-myo-inositol-3-phosphate). R463 lines the a 1,2-diacyl-sn-glycero-3-phospho-(1D-myo-inositol-3-phosphate) pocket. A coiled-coil region spans residues 593-627; the sequence is IHSRYKELLAKRAELQRKVEELQREISNRSTSSSE. The disordered stretch occupies residues 614–643; that stretch reads LQREISNRSTSSSERASSPAQCVTPVQTVV. The span at 620–631 shows a compositional bias: low complexity; sequence NRSTSSSERASS. Polar residues predominate over residues 632 to 643; that stretch reads PAQCVTPVQTVV.

It belongs to the protein-tyrosine phosphatase family. Non-receptor class myotubularin subfamily. Homodimer (via coiled-coil domain). Heterotetramer consisting of one MTMR2 dimer and one SBF2/MTMR13 dimer; specifically in peripheral nerves stabilizes SBF2/MTMR13 at the membranes and increases MTMR2 catalytic activity towards phosphatidylinositol 3,5-bisphosphate and to a lesser extent towards phosphatidylinositol 3-phosphate. Heterodimer with SBF1/MTMR5; acts as an adapter for the phosphatase MTMR2 to regulate MTMR2 catalytic activity and subcellular location. Heterodimer with MTMR12. Post-translationally, phosphorylation at Ser-58 decreases MTMR2 localization to endocytic vesicular structures. Expressed in sciatic nerve and in Schwann cells (at protein level). Detected in adult dorsal root ganglia, neurons of the central nervous system, motor neurons, cell soma and neurites of sensory neurons, olfactory bulb, cerebellum and hippocampus.

It localises to the cytoplasm. Its subcellular location is the early endosome membrane. The protein localises to the perinuclear region. The protein resides in the cell projection. It is found in the axon. It localises to the endosome membrane. The enzyme catalyses a 1,2-diacyl-sn-glycero-3-phospho-(1D-myo-inositol-3,5-bisphosphate) + H2O = a 1,2-diacyl-sn-glycero-3-phospho-(1D-myo-inositol-5-phosphate) + phosphate. The catalysed reaction is a 1,2-diacyl-sn-glycero-3-phospho-(1D-myo-inositol-3-phosphate) + H2O = a 1,2-diacyl-sn-glycero-3-phospho-(1D-myo-inositol) + phosphate. It carries out the reaction 1,2-dioctanoyl-sn-glycero-3-phospho-(1-D-myo-inositol-3-phosphate) + H2O = 1,2-dioctanoyl-sn-glycero-3-phospho-(1D-myo-inositol) + phosphate. It catalyses the reaction 1,2-dioctanoyl-sn-glycero-3-phospho-(1D-myo-inositol-3,5-bisphosphate) + H2O = 1,2-dioctanoyl-sn-glycero-3-phospho-(1D-myo-inositol-5-phosphate) + phosphate. In terms of biological role, lipid phosphatase that specifically dephosphorylates the D-3 position of phosphatidylinositol 3-phosphate and phosphatidylinositol 3,5-bisphosphate, generating phosphatidylinositol and phosphatidylinositol 5-phosphate. Regulates the level of these phosphoinositides critical for various biological processes including autophagy initiation and autophagosome maturation. The sequence is that of Phosphatidylinositol-3,5-bisphosphate 3-phosphatase MTMR2 from Mus musculus (Mouse).